We begin with the raw amino-acid sequence, 748 residues long: Photosystem I P700 chlorophyll a apoprotein A1 (748 aa).

The next 8 helical transmembrane spans lie at 69–92 (IFSAHFGQLAIIFIWLSGMYFHGA), 155–178 (LYVTALGGLGMAGLMIFAGWFHYH), 194–218 (LNHHLAGLLGLGSLSWAGHQIHVSL), 290–308 (VAHHHLAIAVLFLVAGHMY), 345–368 (WHANLAINLAMLGSLSIIVAHHMY), 384–410 (LSLFTHHMWIGGFCIVGAGAHAAIYMV), 432–454 (AIISHLNWVCIFLGMHSFGLYIH), and 529–547 (FMVHHIHAFTIHVTTLILL). Positions 571 and 580 each coordinate [4Fe-4S] cluster. The next 2 membrane-spanning stretches (helical) occupy residues 587–608 (HVFLGLFWMYNALSIVIFHFSW) and 662–684 (LSAYGLMFLGAHFVWAFSLMFLF). Histidine 673 is a chlorophyll a' binding site. Chlorophyll a contacts are provided by methionine 681 and tyrosine 689. Tryptophan 690 contacts phylloquinone. The helical transmembrane segment at 722–742 (AVGVAHYLLGGIATTWAFFLA) threads the bilayer.

Belongs to the PsaA/PsaB family. The PsaA/B heterodimer binds the P700 chlorophyll special pair and subsequent electron acceptors. PSI consists of a core antenna complex that captures photons, and an electron transfer chain that converts photonic excitation into a charge separation. The eukaryotic PSI reaction center is composed of at least 11 subunits. P700 is a chlorophyll a/chlorophyll a' dimer, A0 is one or more chlorophyll a, A1 is one or both phylloquinones and FX is a shared 4Fe-4S iron-sulfur center. is required as a cofactor.

It localises to the plastid. The protein resides in the chloroplast thylakoid membrane. The enzyme catalyses reduced [plastocyanin] + hnu + oxidized [2Fe-2S]-[ferredoxin] = oxidized [plastocyanin] + reduced [2Fe-2S]-[ferredoxin]. Functionally, psaA and PsaB bind P700, the primary electron donor of photosystem I (PSI), as well as the electron acceptors A0, A1 and FX. PSI is a plastocyanin/cytochrome c6-ferredoxin oxidoreductase, converting photonic excitation into a charge separation, which transfers an electron from the donor P700 chlorophyll pair to the spectroscopically characterized acceptors A0, A1, FX, FA and FB in turn. Oxidized P700 is reduced on the lumenal side of the thylakoid membrane by plastocyanin or cytochrome c6. In Cyanidioschyzon merolae (strain NIES-3377 / 10D) (Unicellular red alga), this protein is Photosystem I P700 chlorophyll a apoprotein A1.